A 237-amino-acid polypeptide reads, in one-letter code: Orotidine 5'-phosphate decarboxylase (237 aa).

Substrate contacts are provided by residues Asp11, Lys34, 61 to 70, Thr123, Arg185, Gln194, Gly214, and Arg215; that span reads DLKLHDIPNT. The Proton donor role is filled by Lys63.

Belongs to the OMP decarboxylase family. Type 1 subfamily. Homodimer.

It catalyses the reaction orotidine 5'-phosphate + H(+) = UMP + CO2. It functions in the pathway pyrimidine metabolism; UMP biosynthesis via de novo pathway; UMP from orotate: step 2/2. In terms of biological role, catalyzes the decarboxylation of orotidine 5'-monophosphate (OMP) to uridine 5'-monophosphate (UMP). The sequence is that of Orotidine 5'-phosphate decarboxylase from Ligilactobacillus salivarius (strain UCC118) (Lactobacillus salivarius).